The sequence spans 335 residues: Serpentine receptor class alpha-25 (335 aa).

5 helical membrane-spanning segments follow: residues 22-42 (IPVK…FYFA), 151-171 (LLII…YGVP), 195-215 (FRTV…YLSV), 245-265 (CILI…VNYI), and 280-300 (LAPF…VIYF).

Belongs to the nematode receptor-like protein sra family.

The protein localises to the membrane. This Caenorhabditis elegans protein is Serpentine receptor class alpha-25 (sra-25).